Consider the following 406-residue polypeptide: MSSIIHGAGAATTTLSTFNSVDSKKLFVAPSRTNLSVRSQRYIVAGSDASKKSFGSGLRVRHSQKLIPNAVATKEADTSASTGHELLLFEALQEGLEEEMDRDPHVCVMGEDVGHYGGSYKVTKGLADKFGDLRVLDTPICENAFTGMGIGAAMTGLRPVIEGMNMGFLLLAFNQISNNCGMLHYTSGGQFTIPVVIRGPGGVGRQLGAEHSQRLESYFQSIPGIQMVACSTPYNAKGLMKAAIRSENPVILFEHVLLYNLKEKIPDEDYVCNLEEAEMVRPGEHITILTYSRMRYHVMQAAKTLVNKGYDPEVIDIRSLKPFDLHTIGNSVKKTHRVLIVEECMRTGGIGASLTAAINENFHDYLDAPVMCLSSQDVPTPYAGTLEEWTVVQPAQIVTAVEQLCQ.

The transit peptide at 1–44 (MSSIIHGAGAATTTLSTFNSVDSKKLFVAPSRTNLSVRSQRYIV) directs the protein to the chloroplast. E142 serves as a coordination point for thiamine diphosphate. V195, A243, I244, and N248 together coordinate K(+).

As to quaternary structure, tetramer of 2 alpha and 2 beta subunits. Thiamine diphosphate serves as cofactor.

The protein resides in the plastid. The protein localises to the chloroplast. It carries out the reaction N(6)-[(R)-lipoyl]-L-lysyl-[protein] + pyruvate + H(+) = N(6)-[(R)-S(8)-acetyldihydrolipoyl]-L-lysyl-[protein] + CO2. In terms of biological role, the pyruvate dehydrogenase complex catalyzes the overall conversion of pyruvate to acetyl-CoA and CO(2). It contains multiple copies of three enzymatic components: pyruvate dehydrogenase (E1), dihydrolipoamide acetyltransferase (E2) and lipoamide dehydrogenase (E3). The chain is Pyruvate dehydrogenase E1 component subunit beta-2, chloroplastic (PDH-E1 BETA) from Arabidopsis thaliana (Mouse-ear cress).